A 127-amino-acid polypeptide reads, in one-letter code: Movement protein TGB2 (127 aa).

Residues 1–24 (MSLSHGTGAPAISTPLTLRPPPDN) are Cytoplasmic-facing. Residues 25–45 (TKAILTIAIGIAASLVFFMLT) form a helical membrane-spanning segment. Over 46–85 (RNNLPHVGDNIHSLPHGGSYIDGTKSINYRPPASRYPSSN) the chain is Lumenal. The chain crosses the membrane as a helical span at residues 86–106 (LLAFAPPILAAVLFFLTQPYL). At 107 to 127 (ATRRSRCVRCFVVHGACTNHT) the chain is on the cytoplasmic side.

The protein belongs to the Tymovirales TGBp2 protein family.

The protein resides in the host endoplasmic reticulum membrane. Its function is as follows. Plays a role in viral cell-to-cell propagation, by facilitating genome transport to neighboring plant cells through plasmosdesmata,. This chain is Movement protein TGB2, found in Setaria italica (Foxtail millet).